A 491-amino-acid chain; its full sequence is UDP-N-acetylmuramate--L-alanine ligase (491 aa).

115–121 (GTHGKTT) contacts ATP.

The protein belongs to the MurCDEF family.

Its subcellular location is the cytoplasm. The catalysed reaction is UDP-N-acetyl-alpha-D-muramate + L-alanine + ATP = UDP-N-acetyl-alpha-D-muramoyl-L-alanine + ADP + phosphate + H(+). It participates in cell wall biogenesis; peptidoglycan biosynthesis. Its function is as follows. Cell wall formation. In Parvibaculum lavamentivorans (strain DS-1 / DSM 13023 / NCIMB 13966), this protein is UDP-N-acetylmuramate--L-alanine ligase.